A 270-amino-acid chain; its full sequence is 5'-AMP-activated protein kinase subunit beta-1 (270 aa).

The disordered stretch occupies residues 1–43; that stretch reads MGNTSSERAALERQAGHKTPRRDSSGGTKDGDRPKILMDSPED. Gly-2 is lipidated: N-myristoyl glycine. Thr-4 is modified (phosphothreonine). Phosphoserine occurs at positions 5 and 6. Residues 9-36 are compositionally biased toward basic and acidic residues; sequence AALERQAGHKTPRRDSSGGTKDGDRPKI. Phosphothreonine is present on Thr-19. Ser-24 and Ser-25 each carry phosphoserine; by autocatalysis. A phosphoserine mark is found at Ser-40, Ser-96, and Ser-101. The tract at residues 68–163 is glycogen-binding domain; the sequence is EVNEKAPAQA…QVKKTDFEVF (96 aa). Ser-108 carries the phosphoserine; by autocatalysis modification. Thr-148 is subject to Phosphothreonine. Ser-182 carries the phosphoserine modification. Lys-201 bears the N6-succinyllysine mark.

Belongs to the 5'-AMP-activated protein kinase beta subunit family. AMPK is a heterotrimer of an alpha catalytic subunit (PRKAA1 or PRKAA2), a beta (PRKAB1 or PRKAB2) and a gamma non-catalytic subunits (PRKAG1, PRKAG2 or PRKAG3). Interacts with FNIP1 and FNIP2. Phosphorylated when associated with the catalytic subunit (PRKAA1 or PRKAA2). Phosphorylated by ULK1; leading to negatively regulate AMPK activity and suggesting the existence of a regulatory feedback loop between ULK1 and AMPK. Highly expressed in kidney, heart, white adipose tissue, lung and spleen.

Its function is as follows. Non-catalytic subunit of AMP-activated protein kinase (AMPK), an energy sensor protein kinase that plays a key role in regulating cellular energy metabolism. In response to reduction of intracellular ATP levels, AMPK activates energy-producing pathways and inhibits energy-consuming processes: inhibits protein, carbohydrate and lipid biosynthesis, as well as cell growth and proliferation. AMPK acts via direct phosphorylation of metabolic enzymes, and by longer-term effects via phosphorylation of transcription regulators. Also acts as a regulator of cellular polarity by remodeling the actin cytoskeleton; probably by indirectly activating myosin. Beta non-catalytic subunit acts as a scaffold on which the AMPK complex assembles, via its C-terminus that bridges alpha (PRKAA1 or PRKAA2) and gamma subunits (PRKAG1, PRKAG2 or PRKAG3). In Rattus norvegicus (Rat), this protein is 5'-AMP-activated protein kinase subunit beta-1 (Prkab1).